Reading from the N-terminus, the 215-residue chain is Ribonuclease S-6 (215 aa).

Positions 1–22 are cleaved as a signal peptide; it reads MFNLPLTSVFVIFLFALSPIYG. Q32 contributes to the RNA binding site. A disulfide bond links C38 and C43. The N-linked (GlcNAc...) asparagine glycan is linked to N49. H53 serves as a coordination point for RNA. The active-site Proton donor is H53. An N-linked (GlcNAc...) asparagine glycan is attached at N59. A disulfide bond links C67 and C116. RNA-binding positions include 91–92, R94, F105, 108–109, and 112–113; these read DL, RE, and KH. The active site involves E109. H113 acts as the Proton acceptor in catalysis. N160 and N172 each carry an N-linked (GlcNAc...) asparagine glycan. 2 cysteine pairs are disulfide-bonded: C175/C204 and C187/C198.

The protein belongs to the RNase T2 family.

Its subcellular location is the secreted. It is found in the extracellular space. It carries out the reaction a ribonucleotidyl-ribonucleotide-RNA + H2O = a 3'-end 3'-phospho-ribonucleotide-RNA + a 5'-end dephospho-ribonucleoside-RNA + H(+). In terms of biological role, self-incompatibility (SI) is the inherited ability of a flowering plant to prevent self-fertilization by discriminating between self and non-self pollen during pollination. In many species of the Solanaceae, self-incompatibility is controlled by the single, multiallelic locus S. This stylar glycoprotein is associated with expression of self-incompatibility in potato. In Nicotiana alata (Winged tobacco), this protein is Ribonuclease S-6.